We begin with the raw amino-acid sequence, 727 residues long: Protein TITANIA (727 aa).

The tract at residues 1 to 136 (MFGDSDGSKD…LASLLQPVPA (136 aa)) is disordered. A compositionally biased stretch (pro residues) spans 14–25 (GAPPSTTDPPFP). Residues 67-88 (DDGKHCVERDFLHLSAPKRGDP) are compositionally biased toward basic and acidic residues. Low complexity predominate over residues 104-117 (DSLQLSLSLNSDGP). Residues 406–470 (ACTCSVCHKF…QFQCLACNHS (65 aa)) form a PHD-type zinc finger. Positions 629–697 (VKCKEAEAKL…LEELKMLENS (69 aa)) form a coiled coil.

In terms of tissue distribution, widely expressed.

The protein resides in the nucleus. Functionally, probable transcription factor that functions as a regulator of metal transporter genes responsible for essential metals delivery to shoots and normal plant growth. Required for the maintenance of metal transporter gene expression, such as IRT1, IRT2, ZIP1, ZIP9, NRAMP1 and NRAMP5. The polypeptide is Protein TITANIA (Oryza sativa subsp. japonica (Rice)).